The chain runs to 25 residues: Caerin-1.5 (25 aa).

L25 is modified (leucine amide).

As to expression, expressed by the skin parotoid and/or rostral glands.

It localises to the secreted. Functionally, antibacterial peptide, that adopts an alpha helical conformation which can disrupt bacterial membranes. Each caerin displays a different antimicrobial specificity. The sequence is that of Caerin-1.5 from Ranoidea caerulea (Green tree frog).